Here is a 1090-residue protein sequence, read N- to C-terminus: UPF0507 protein SCRG_01893 (1090 aa).

The VPS9 domain maps to phenylalanine 289–asparagine 436.

The protein belongs to the UPF0507 family.

The chain is UPF0507 protein SCRG_01893 from Saccharomyces cerevisiae (strain RM11-1a) (Baker's yeast).